Here is a 124-residue protein sequence, read N- to C-terminus: Sporulation initiation phosphotransferase F (124 aa).

The Response regulatory domain occupies 5–119 (KILIVDDQYG…EIRDAVKKYL (115 aa)). Mg(2+)-binding residues include Asp-10, Asp-11, Asp-54, and Lys-56. At Asp-54 the chain carries 4-aspartylphosphate.

Mg(2+) is required as a cofactor. Post-translationally, phosphorylated by KinA and KinB. Dephosphorylated by RapA and RapB.

The protein resides in the cytoplasm. In terms of biological role, key element in the phosphorelay regulating sporulation initiation. Phosphorylation of spo0B during sporulation initiation. This is Sporulation initiation phosphotransferase F (spo0F) from Bacillus subtilis (strain 168).